The sequence spans 201 residues: Recombination protein RecR (201 aa).

A C4-type zinc finger spans residues 60 to 75 (CSCCGNVDTSDPCTIC). The region spanning 83–178 (TTLIVVEDVS…RVTRLAHGVP (96 aa)) is the Toprim domain.

It belongs to the RecR family.

Functionally, may play a role in DNA repair. It seems to be involved in an RecBC-independent recombinational process of DNA repair. It may act with RecF and RecO. This chain is Recombination protein RecR, found in Brucella anthropi (strain ATCC 49188 / DSM 6882 / CCUG 24695 / JCM 21032 / LMG 3331 / NBRC 15819 / NCTC 12168 / Alc 37) (Ochrobactrum anthropi).